The sequence spans 695 residues: Electrogenic aspartate/glutamate antiporter Aralar, mitochondrial (695 aa).

Residues 1 to 310 (MPMHIPFPFN…DYSDLSNIAP (310 aa)) are N-terminal domain. Residues 2–345 (PMHIPFPFNW…FIQVLESSYR (344 aa)) lie on the Mitochondrial intermembrane side of the membrane. EF-hand domains lie at 71 to 104 (FNDE…GLLC), 105 to 140 (TPDA…TELH), 142 to 175 (KIPF…LLHD), and 176 to 211 (FHEE…VKRH). Residues Asp-84, Ser-86, Asp-88, Leu-90, Glu-95, Asp-118, Asn-122, Thr-124, and Asp-129 each contribute to the Ca(2+) site. The Ca(2+) site is built by Asp-189, Thr-193, and Asp-200. The tract at residues 311-327 (EHYTKHMTHRLAEIKAV) is linker loop domain. The carrier domain stretch occupies residues 336–627 (FIQVLESSYR…RLFYVDFGGT (292 aa)). Solcar repeat units follow at residues 340–431 (LESS…VRDK), 439–523 (IPTW…TKAM), and 531–619 (NHPL…LQRL). A helical transmembrane segment spans residues 346 to 363 (FTLGSFAGAVGATVVYPI). At 364–405 (DLVKTRMQNQRAGSYIGEVAYRNSWDCFKKVVRHEGFMGLYR) the chain is on the mitochondrial matrix side. Residues 406–425 (GLLPQLMGVAPEKAIKLTVN) form a helical membrane-spanning segment. Residues 426–448 (DLVRDKLTDKKGNIPTWAEVLAG) lie on the Mitochondrial intermembrane side of the membrane. A helical transmembrane segment spans residues 449 to 462 (GCAGASQVVFTNPL). The Mitochondrial matrix segment spans residues 463 to 497 (EIVKIRLQVAGEIASGSKIRAWSVVRELGLFGLYK). Residues 498-517 (GARACLLRDVPFSAIYFPTY) form a helical membrane-spanning segment. The Mitochondrial intermembrane portion of the chain corresponds to 518-536 (AHTKAMMADKDGYNHPLTL). Residues 537–554 (LAAGAIAGVPAASLVTPA) form a helical membrane-spanning segment. Residues 555 to 593 (DVIKTRLQVVARSGQTTYTGVWDATKKIMAEEGPRAFWK) are Mitochondrial matrix-facing. The chain crosses the membrane as a helical span at residues 594–613 (GTAARVFRSSPQFGVTLVTY). Topologically, residues 614–695 (ELLQRLFYVD…AASPSTATGS (82 aa)) are mitochondrial intermembrane. The interval 628–695 (QPKGSEAHKI…AASPSTATGS (68 aa)) is C-terminal domain.

The protein belongs to the mitochondrial carrier (TC 2.A.29) family. In terms of assembly, homodimer (via N-terminus). The cofactor is Ca(2+). As to expression, expressed throughout the body in both males and females, including in ovaries and testes. Specifically expressed in female ovaries. In terms of tissue distribution, expressed throughout the body in both males and females but absent from ovaries and testes.

The protein localises to the mitochondrion inner membrane. The enzyme catalyses L-aspartate(in) + L-glutamate(out) + H(+)(out) = L-aspartate(out) + L-glutamate(in) + H(+)(in). It catalyses the reaction 3-sulfino-L-alanine(out) + L-glutamate(in) + H(+)(in) = 3-sulfino-L-alanine(in) + L-glutamate(out) + H(+)(out). It carries out the reaction L-2-aminoadipate(in) + L-glutamate(out) + H(+)(out) = L-2-aminoadipate(out) + L-glutamate(in) + H(+)(in). The catalysed reaction is L-glutamine(in) + L-glutamate(out) + Na(+)(out) + H(+)(out) = L-glutamine(out) + L-glutamate(in) + Na(+)(in) + H(+)(in). With respect to regulation, activated by Ca(2+). Inhibited by p-chloromercuribenzoate, pyrocarbonate, mersalyl, tannic acid and N-ethylmaleimide. Functionally, mitochondrial electrogenic aspartate/glutamate antiporter that favors efflux of aspartate and entry of glutamate and proton within the mitochondria as part of the malate-aspartate shuttle. Also mediates the exchange of L-cysteinesulfinate (3-sulfino-L-alanine) for L-glutamate. Necessary for gamma-aminobutyric acid (GABA) uptake in brain mitochondria in response to increased mitochondrial membrane polarization; does not possess detectable GABA transport activity but role may be indirect. Possesses transport activity towards L-aspartate, L-glutamate and L-cysteinesulfinate (3-sulfino-L-alanine). L-glutamine transport activity is undetectable. GABA transport activity is undetectable. In terms of biological role, possesses transport activity towards L-aspartate, L-glutamate and L-cysteinesulfinate (3-sulfino-L-alanine). Has a wider substrate specificity range that includes L-2-aminoadipate and L-glutamine. GABA transport activity is undetectable. The protein is Electrogenic aspartate/glutamate antiporter Aralar, mitochondrial of Drosophila melanogaster (Fruit fly).